Consider the following 232-residue polypeptide: Esterase YpfH (232 aa).

Catalysis depends on charge relay system residues Ser111, Asp159, and His191.

It belongs to the AB hydrolase superfamily. AB hydrolase 2 family.

Displays esterase activity toward palmitoyl-CoA and pNP-butyrate. In Escherichia coli (strain K12), this protein is Esterase YpfH (ypfH).